We begin with the raw amino-acid sequence, 120 residues long: Large ribosomal subunit protein bL17 (120 aa).

This sequence belongs to the bacterial ribosomal protein bL17 family. As to quaternary structure, part of the 50S ribosomal subunit. Contacts protein L32.

This is Large ribosomal subunit protein bL17 from Mycoplasmopsis pulmonis (strain UAB CTIP) (Mycoplasma pulmonis).